A 595-amino-acid chain; its full sequence is Mitoguardin 1 (595 aa).

Helical transmembrane passes span 11–31 (LPIKLAALHFLDLPLSVYYSL) and 38–58 (TGTKKLFAATAFGAVSLIIIA).

It belongs to the mitoguardin family. In terms of assembly, homodimer and heterodimer; forms heterodimers with miga2.

The protein localises to the mitochondrion outer membrane. Regulator of mitochondrial fusion: acts by forming homo- and heterodimers at the mitochondrial outer membrane and facilitating the formation of pld6/MitoPLD dimers. May act by regulating phospholipid metabolism via pld6/MitoPLD. The polypeptide is Mitoguardin 1 (Danio rerio (Zebrafish)).